The chain runs to 142 residues: Universal stress protein C (142 aa).

Belongs to the universal stress protein A family.

The protein resides in the cytoplasm. In terms of biological role, required for resistance to DNA-damaging agents. In Escherichia coli O6:H1 (strain CFT073 / ATCC 700928 / UPEC), this protein is Universal stress protein C (uspC).